Reading from the N-terminus, the 93-residue chain is Putative pterin-4-alpha-carbinolamine dehydratase (93 aa).

This sequence belongs to the pterin-4-alpha-carbinolamine dehydratase family.

The enzyme catalyses (4aS,6R)-4a-hydroxy-L-erythro-5,6,7,8-tetrahydrobiopterin = (6R)-L-erythro-6,7-dihydrobiopterin + H2O. In Sulfurisphaera tokodaii (strain DSM 16993 / JCM 10545 / NBRC 100140 / 7) (Sulfolobus tokodaii), this protein is Putative pterin-4-alpha-carbinolamine dehydratase.